A 459-amino-acid polypeptide reads, in one-letter code: Endoglucanase CelA (459 aa).

Residues 1–27 (MKRLLALLATGVSIVGLTALAGPPAQA) form the signal peptide. The region spanning 28 to 134 (ATGCKAEYTI…TLNGATCSGS (107 aa)) is the CBM2 domain. Cys31 and Cys131 are joined by a disulfide. A disordered region spans residues 129-151 (ATCSGSVTDPPTDPPTDPPATGT). The tract at residues 136–147 (TDPPTDPPTDPP) is linker ('hinge') (Pro-Thr box). The segment at 148-357 (ATGTPAAVNG…YAFHFYAASH (210 aa)) is catalytic. Catalysis depends on Glu286, which acts as the Proton donor. Glu378 functions as the Nucleophile in the catalytic mechanism.

Belongs to the glycosyl hydrolase 5 (cellulase A) family. In terms of processing, the linker region (also termed 'hinge') may be a potential site for proteolysis.

The catalysed reaction is Endohydrolysis of (1-&gt;4)-beta-D-glucosidic linkages in cellulose, lichenin and cereal beta-D-glucans.. This is Endoglucanase CelA (celA) from Streptomyces lividans.